Consider the following 227-residue polypeptide: Large ribosomal subunit protein uL3 (227 aa).

This sequence belongs to the universal ribosomal protein uL3 family. Part of the 50S ribosomal subunit. Forms a cluster with proteins L14 and L19.

Functionally, one of the primary rRNA binding proteins, it binds directly near the 3'-end of the 23S rRNA, where it nucleates assembly of the 50S subunit. This Persephonella marina (strain DSM 14350 / EX-H1) protein is Large ribosomal subunit protein uL3.